Here is a 418-residue protein sequence, read N- to C-terminus: Gamma-glutamyl phosphate reductase (418 aa).

It belongs to the gamma-glutamyl phosphate reductase family.

It localises to the cytoplasm. The catalysed reaction is L-glutamate 5-semialdehyde + phosphate + NADP(+) = L-glutamyl 5-phosphate + NADPH + H(+). Its pathway is amino-acid biosynthesis; L-proline biosynthesis; L-glutamate 5-semialdehyde from L-glutamate: step 2/2. Catalyzes the NADPH-dependent reduction of L-glutamate 5-phosphate into L-glutamate 5-semialdehyde and phosphate. The product spontaneously undergoes cyclization to form 1-pyrroline-5-carboxylate. The sequence is that of Gamma-glutamyl phosphate reductase from Lacticaseibacillus paracasei (strain ATCC 334 / BCRC 17002 / CCUG 31169 / CIP 107868 / KCTC 3260 / NRRL B-441) (Lactobacillus paracasei).